Here is a 348-residue protein sequence, read N- to C-terminus: VIP36-like protein (348 aa).

The signal sequence occupies residues methionine 1–glycine 38. Over proline 39–alanine 313 the chain is Lumenal. Residues glutamate 49–leucine 274 form the L-type lectin-like domain. A carbohydrate contacts are provided by serine 93 and aspartate 128. Ca(2+) contacts are provided by aspartate 159, tyrosine 161, and asparagine 163. Tyrosine 161 and asparagine 163 together coordinate a carbohydrate. Asparagine 181 carries an N-linked (GlcNAc...) asparagine glycan. Histidine 188 contributes to the a carbohydrate binding site. Aspartate 191 provides a ligand contact to Ca(2+). Cysteine 200 and cysteine 237 are joined by a disulfide. Residue glycine 258 to leucine 260 participates in a carbohydrate binding. A helical transmembrane segment spans residues leucine 314 to isoleucine 334. The Cytoplasmic segment spans residues leucine 335–tyrosine 348. The Endoplasmic reticulum retention signal signature appears at arginine 344–arginine 346.

It localises to the endoplasmic reticulum membrane. Its subcellular location is the golgi apparatus membrane. Its function is as follows. May be involved in the regulation of export from the endoplasmic reticulum of a subset of glycoproteins. May function as a regulator of ERGIC-53. This chain is VIP36-like protein (LMAN2L), found in Bos taurus (Bovine).